Consider the following 168-residue polypeptide: Ribosome maturation factor RimM (168 aa).

Residues 93–167 (ENEFYQSDLV…YITLNMPEFI (75 aa)) form the PRC barrel domain.

Belongs to the RimM family. Binds ribosomal protein uS19.

The protein resides in the cytoplasm. In terms of biological role, an accessory protein needed during the final step in the assembly of 30S ribosomal subunit, possibly for assembly of the head region. Essential for efficient processing of 16S rRNA. May be needed both before and after RbfA during the maturation of 16S rRNA. It has affinity for free ribosomal 30S subunits but not for 70S ribosomes. The protein is Ribosome maturation factor RimM of Wolbachia sp. subsp. Brugia malayi (strain TRS).